The chain runs to 518 residues: Putative cytochrome P450 CYP13A7 (518 aa).

A heme-binding site is contributed by Cys-464.

Belongs to the cytochrome P450 family. It depends on heme as a cofactor.

Its function is as follows. Cytochromes P450 are a group of heme-thiolate monooxygenases. They oxidize a variety of structurally unrelated compounds, including steroids, fatty acids, and xenobiotics. The chain is Putative cytochrome P450 CYP13A7 (cyp-13A7) from Caenorhabditis elegans.